An 82-amino-acid polypeptide reads, in one-letter code: Sec-independent protein translocase protein TatA (82 aa).

A helical transmembrane segment spans residues 1–21 (MGGISIWQLLIIAVIIVLLFG). The disordered stretch occupies residues 48–82 (PAKEAKKDADFVPQNLEKKEAETVEKQKQNDKEQA).

Belongs to the TatA/E family. As to quaternary structure, the Tat system comprises two distinct complexes: a TatABC complex, containing multiple copies of TatA, TatB and TatC subunits, and a separate TatA complex, containing only TatA subunits. Substrates initially bind to the TatABC complex, which probably triggers association of the separate TatA complex to form the active translocon.

The protein resides in the cell inner membrane. Its function is as follows. Part of the twin-arginine translocation (Tat) system that transports large folded proteins containing a characteristic twin-arginine motif in their signal peptide across membranes. TatA could form the protein-conducting channel of the Tat system. This chain is Sec-independent protein translocase protein TatA, found in Aliivibrio fischeri (strain ATCC 700601 / ES114) (Vibrio fischeri).